The following is a 426-amino-acid chain: Enolase (426 aa).

(2R)-2-phosphoglycerate is bound at residue glutamine 165. The active-site Proton donor is glutamate 207. 3 residues coordinate Mg(2+): aspartate 244, glutamate 285, and aspartate 312. The (2R)-2-phosphoglycerate site is built by lysine 337, arginine 366, serine 367, and lysine 388. The active-site Proton acceptor is the lysine 337.

Belongs to the enolase family. The cofactor is Mg(2+).

It is found in the cytoplasm. The protein resides in the secreted. Its subcellular location is the cell surface. It carries out the reaction (2R)-2-phosphoglycerate = phosphoenolpyruvate + H2O. It functions in the pathway carbohydrate degradation; glycolysis; pyruvate from D-glyceraldehyde 3-phosphate: step 4/5. Its function is as follows. Catalyzes the reversible conversion of 2-phosphoglycerate (2-PG) into phosphoenolpyruvate (PEP). It is essential for the degradation of carbohydrates via glycolysis. The polypeptide is Enolase (Cyanothece sp. (strain PCC 7425 / ATCC 29141)).